A 192-amino-acid chain; its full sequence is Fe/S biogenesis protein NfuA (192 aa).

[4Fe-4S] cluster contacts are provided by Cys150 and Cys153.

This sequence belongs to the NfuA family. As to quaternary structure, homodimer. It depends on [4Fe-4S] cluster as a cofactor.

Involved in iron-sulfur cluster biogenesis. Binds a 4Fe-4S cluster, can transfer this cluster to apoproteins, and thereby intervenes in the maturation of Fe/S proteins. Could also act as a scaffold/chaperone for damaged Fe/S proteins. In Ruthia magnifica subsp. Calyptogena magnifica, this protein is Fe/S biogenesis protein NfuA.